The following is a 247-amino-acid chain: Putative urease accessory protein UreD homolog (247 aa).

Belongs to the UreD family. In terms of assembly, ureD, UreF and UreG form a complex that acts as a GTP-hydrolysis-dependent molecular chaperone, activating the urease apoprotein by helping to assemble the nickel containing metallocenter of UreC. The UreE protein probably delivers the nickel.

The protein localises to the cytoplasm. Its function is as follows. Required for maturation of urease via the functional incorporation of the urease nickel metallocenter. The sequence is that of Putative urease accessory protein UreD homolog from Escherichia coli O157:H7.